The sequence spans 116 residues: Ribosome-binding factor A (116 aa).

Belongs to the RbfA family. In terms of assembly, monomer. Binds 30S ribosomal subunits, but not 50S ribosomal subunits or 70S ribosomes.

It localises to the cytoplasm. Functionally, one of several proteins that assist in the late maturation steps of the functional core of the 30S ribosomal subunit. Associates with free 30S ribosomal subunits (but not with 30S subunits that are part of 70S ribosomes or polysomes). Required for efficient processing of 16S rRNA. May interact with the 5'-terminal helix region of 16S rRNA. This chain is Ribosome-binding factor A, found in Malacoplasma penetrans (strain HF-2) (Mycoplasma penetrans).